Consider the following 1196-residue polypeptide: Contactin rig-6 (1196 aa).

A signal peptide spans 1-19 (MMMLIRCISIFLLFGFVNA). N100 and N195 each carry an N-linked (GlcNAc...) asparagine glycan. Ig-like C2-type domains lie at 144 to 225 (PQIS…ARNS) and 232 to 319 (PPIL…CSLS). Cystine bridges form between C169-C220 and C263-C316. A glycan (N-linked (GlcNAc...) asparagine) is linked at N343. 4 consecutive Ig-like C2-type domains span residues 355-438 (PQIF…VKLR), 441-533 (PSIL…ALLT), 539-626 (PVFP…VQLI), and 631-730 (PSIK…EFVT). A disulfide bridge connects residues C372 and C420. N-linked (GlcNAc...) asparagine glycosylation occurs at N457. 2 disulfide bridges follow: C462/C517 and C562/C610. N-linked (GlcNAc...) asparagine glycosylation is present at N644. An intrachain disulfide couples C653 to C718. 4 Fibronectin type-III domains span residues 736-844 (SPIA…TAPG), 849-961 (TIDN…SHGE), 963-1057 (KKVS…TKQH), and 1064-1168 (LIGK…LGSP). Residues N895, N925, N945, N974, N979, N986, N1002, and N1092 are each glycosylated (N-linked (GlcNAc...) asparagine). Residues 1174–1194 (TTGSSDVPIPSLLLLLLLLLW) traverse the membrane as a helical segment. The GPI-anchor amidated serine moiety is linked to residue S1177. Residues 1178 to 1196 (SDVPIPSLLLLLLLLLWRL) constitute a propeptide, removed in mature form.

It belongs to the immunoglobulin superfamily. Contactin family. In terms of assembly, interacts with sax-7; the interaction establishes synaptic connections between neurons. In terms of tissue distribution, expressed in neurons including the I1 and I3 pharyngeal interneurons, NSM and VNC motor neurons, HSN and CAN neurons, the ALM and PLM touch receptor neurons and other unidentified head neurons. Expressed in AVG interneurons. Also expressed in somatic muscles, the excretory canal, the excretory cell and the hypodermis.

The protein resides in the cell membrane. Its subcellular location is the perikaryon. It is found in the cell projection. It localises to the axon. The protein localises to the synapse. The protein resides in the cytoplasm. Its function is as follows. Probable cell adhesion protein involved in patterning of the nervous system, playing a role in ALM and PLM touch receptor axon growth and VNC axon navigation. By associating with the transmembrane protein sax-7, mediates axonal interactions to establish synaptic connections between the AVG interneuron and the two PHC sensory neurons. Also required for non-neuronal cell migration in the excretory canal, regulating excretory canal elongation and excretory cell morphogenesis. Plays a role in regulating male mating behavior. This is Contactin rig-6 from Caenorhabditis elegans.